The following is a 318-amino-acid chain: MRFKGLDLNLLVALDALTTERNLTAAARSINLSQPAMSAAIGRLRDYFRDELFTMNGRELRLTPRAEGLASAVRETLLQVQCSIISWEPFNPSKSDRCFRIVLSDFMMLIYFNKIIERVAREAPAVSFELLPLDSDPYEMLSRGDVDFLIVPEFFLSGAHPSAKLFTEKFVCVACSTNVDLPSALTIEQYVSTGHVAAAFGRFLKPSVEGWFLLENGIQRRVEVVVQGFSLIPPVLRGTNRIANLPLRLVEHYESTFPLRIINLPLPLPVFTEAVQWPALHNADPGSIWFREILVEEASRMMSSNAPKIHGLLQQSGS.

One can recognise an HTH lysR-type domain in the interval 6–63 (LDLNLLVALDALTTERNLTAAARSINLSQPAMSAAIGRLRDYFRDELFTMNGRELRLT). The H-T-H motif DNA-binding region spans 23 to 42 (LTAAARSINLSQPAMSAAIG).

The protein belongs to the LysR transcriptional regulatory family.

Its function is as follows. NodD regulates the expression of the nodABCFE genes which encode other nodulation proteins. NodD is also a negative regulator of its own expression. Binds flavonoids as inducers. The protein is Nodulation protein D 2 (nodD2) of Rhizobium leguminosarum bv. phaseoli.